Consider the following 68-residue polypeptide: Large ribosomal subunit protein uL30 (68 aa).

The protein belongs to the universal ribosomal protein uL30 family. Part of the 50S ribosomal subunit.

In Kocuria rhizophila (strain ATCC 9341 / DSM 348 / NBRC 103217 / DC2201), this protein is Large ribosomal subunit protein uL30.